A 1340-amino-acid polypeptide reads, in one-letter code: Iron-sulfur cluster assembly protein SufD (1340 aa).

Positions 477–487 (NSLKHNNNNTK) are enriched in low complexity. 5 disordered regions span residues 477 to 498 (NSLK…ERSS), 723 to 743 (HGKD…NYLN), 765 to 794 (NVST…QSTV), 835 to 865 (EKNE…GEKK), and 992 to 1055 (NIPT…NNIQ). The segment covering 723-734 (HGKDNTQHDDKN) has biased composition (basic and acidic residues). Over residues 782 to 794 (NPDTETNNEQSTV) the composition is skewed to polar residues. Polar residues predominate over residues 1022-1037 (DNLLQNDQATNSNVEI).

This sequence belongs to the iron-sulfur cluster assembly SufBD family. As to quaternary structure, component of a complex composed of SufB, SufC and SufD in a stoichiometric ratio of 1:2:1. Interacts with SufB. Interacts with SufC; the interaction enhances the ATPase activity of SufC.

The protein resides in the plastid. It localises to the apicoplast. It functions in the pathway cofactor biosynthesis; iron-sulfur cluster biosynthesis. Its function is as follows. Participates in the sulfur mobilization (SUF) pathway for iron-sulfur (Fe-S) cluster biogenesis. As part of a complex consisting of SufB-SufC(2)-SufD, involved in assembly of [4Fe-4S] clusters. Enhances the ATPase activity of SufC. The polypeptide is Iron-sulfur cluster assembly protein SufD (Plasmodium berghei (strain Anka)).